A 455-amino-acid chain; its full sequence is Signal recognition particle 54 kDa protein (455 aa).

GTP-binding positions include 104–111 (GLYGHGKT), 184–188 (DTSGR), and 242–245 (TKMD).

Belongs to the GTP-binding SRP family. SRP54 subfamily. In terms of assembly, part of the signal recognition particle protein translocation system, which is composed of SRP and FtsY. Archaeal SRP consists of a 7S RNA molecule of 300 nucleotides and two protein subunits: SRP54 and SRP19.

The protein localises to the cytoplasm. The catalysed reaction is GTP + H2O = GDP + phosphate + H(+). Functionally, involved in targeting and insertion of nascent membrane proteins into the cytoplasmic membrane. Binds to the hydrophobic signal sequence of the ribosome-nascent chain (RNC) as it emerges from the ribosomes. The SRP-RNC complex is then targeted to the cytoplasmic membrane where it interacts with the SRP receptor FtsY. This Thermoplasma volcanium (strain ATCC 51530 / DSM 4299 / JCM 9571 / NBRC 15438 / GSS1) protein is Signal recognition particle 54 kDa protein.